Reading from the N-terminus, the 352-residue chain is N-terminal EF-hand calcium-binding protein 1 (352 aa).

Ser-4 carries the phosphoserine modification. 2 consecutive EF-hand domains span residues 26 to 61 (KGMS…GVLS) and 60 to 95 (LSGE…HLGE). Residues Asp-39, Asn-41, Asp-43, Lys-45, and Glu-50 each coordinate Ca(2+). The stretch at 135–163 (LLKETLNQLQSLQNSLECAMETTEEQTRQ) forms a coiled coil. The tract at residues 155-202 (ETTEEQTRQERQGPSKPEVLSIQWPGKRSSRRVQRHNSFSPNSPQFNV) is disordered. Positions 190 to 202 (HNSFSPNSPQFNV) are enriched in polar residues. Residues Ser-192 and Ser-197 each carry the phosphoserine modification. Residues 209–275 (EEDNQWMTQI…EEFQLALKHY (67 aa)) are a coiled coil. The 89-residue stretch at 252–340 (MLVQRQMSVT…LETPELTSTM (89 aa)) folds into the ABM domain.

In terms of assembly, interacts with STX1. May interact with CPNE6. Expressed in brain (at protein level). Expressed in the cerebral cortex only in layer 4, thalamic nuclei (the mediodorsal nucleus), hippocampus (a small band of pyramidal neurons at the boundary between CA1 and CA3), interneurons interspersed throughout the hippocampus proper, interneurons in the hilus, bodies of the neurons but also their dendritic projections (at protein level).

It localises to the cytoplasm. This Mus musculus (Mouse) protein is N-terminal EF-hand calcium-binding protein 1 (Necab1).